The sequence spans 287 residues: Uricase (287 aa).

Catalysis depends on charge relay system residues K11 and T58. 7 residues coordinate urate: T58, D59, F160, R177, V219, Q220, and N246. The active-site Charge relay system is H248. Positions 285–287 (SRL) match the Microbody targeting signal motif.

It belongs to the uricase family.

Its subcellular location is the peroxisome. The enzyme catalyses urate + O2 + H2O = 5-hydroxyisourate + H2O2. Its pathway is purine metabolism; urate degradation; (S)-allantoin from urate: step 1/3. Functionally, catalyzes the oxidation of uric acid to 5-hydroxyisourate, which is further processed to form (S)-allantoin. This is Uricase (uox) from Dictyostelium discoideum (Social amoeba).